The chain runs to 343 residues: MVSFKAGINLGGWISQYQVFSKEHFDTFITEKDIETIAEAGFDHVRLPFDYPIIESDDNVGEYKEDGLSYIDRCLEWCKKYNLGLVLDMHHAPGYRFQDFKTSTLFEDPNQQKRFVDIWRFLAKRYINEREHIAFELLNEVVEPDSTRWNKLMLEYIKAIREIDSTMWLYIGGNNYNSPDELKNLADIDDDYIVYNFHFYNPFFFTHQKAHWSESAMAYNRTVKYPGQYEGIEEFVKNNPKYSFMMELNNLKLNKELLRKDLKPAIEFREKKKCKLYCGEFGVIAIADLESRIKWHEDYISLLEEYDIGGAVWNYKKMDFEIYNEDRKPVSQELVNILARRKT.

The Proton donor role is filled by glutamate 140. Catalysis depends on glutamate 280, which acts as the Nucleophile.

This sequence belongs to the glycosyl hydrolase 5 (cellulase A) family.

The catalysed reaction is Endohydrolysis of (1-&gt;4)-beta-D-glucosidic linkages in cellulose, lichenin and cereal beta-D-glucans.. It participates in glycan metabolism; cellulose degradation. Its function is as follows. This enzyme catalyzes the endohydrolysis of 1,4-beta-glucosidic linkages in cellulose, lichenin and cereal beta-D-glucans. In Acetivibrio thermocellus (Hungateiclostridium thermocellum), this protein is Endoglucanase C (celC).